An 89-amino-acid chain; its full sequence is ATP synthase subunit e, mitochondrial (89 aa).

Position 1 is an N-acetylserine (S1). Residues 8-25 (YSSLAAGIVYGAYHTYTL) form a helical membrane-spanning segment.

In terms of assembly, F-type ATP synthases have 2 components, the catalytic core F(1) and the membrane-embedded component F(0), linked together by a central stalk and a peripheral stalk. The central stalk, also called rotor shaft, is often seen as part of F(1). The peripheral stalk is seen as part of F(0). F(0) contains the membrane channel next to the rotor. F-type ATP synthases form dimers but each monomer functions independently in ATP generation. The dimer consists of 18 different polypeptides: ATP1 (subunit alpha, part of F(1), 3 molecules per monomer), ATP2 (subunit beta, part of F(1), 3 molecules per monomer), ATP3 (subunit gamma, part of the central stalk), ATP4 (subunit b, part of the peripheral stalk), ATP5/OSCP (subunit 5/OSCP, part of the peripheral stalk), ATP6 (subunit a, part of the peripheral stalk), ATP7 (subunit d, part of the peripheral stalk), ATP8 (subunit 8, part of the peripheral stalk), OLI1 (subunit c, part of the rotor, 10 molecules per monomer), ATP14 (subunit h, part of the peripheral stalk), ATP15 (subunit epsilon, part of the central stalk), ATP16 (subunit delta, part of the central stalk), ATP17 (subunit f, part of the peripheral stalk), ATP18 (subunit i/j, part of the peripheral stalk). Dimer-specific subunits are ATP19 (subunit k, at interface between monomers), ATP20 (subunit g, at interface between monomers), TIM11 (subunit e, at interface between monomers). Also contains subunit L.

It is found in the mitochondrion inner membrane. Mitochondrial membrane ATP synthase (F(1)F(0) ATP synthase or Complex V) produces ATP from ADP in the presence of a proton gradient across the membrane which is generated by electron transport complexes of the respiratory chain. F-type ATP synthases consist of two structural domains, F(1) - containing the extramembraneous catalytic core, and F(0) - containing the membrane proton channel, linked together by a central stalk and a peripheral stalk. During catalysis, ATP synthesis in the catalytic domain of F(1) is coupled via a rotary mechanism of the central stalk subunits to proton translocation. Part of the complex F(0) domain. Minor subunit located with subunit a/ATP6 in the membrane. Together with subunit g/ATP20, probably contributes to membrane curvature at the site of the ATP synthase dimer, ultimately contributing to formation of cristae. The chain is ATP synthase subunit e, mitochondrial from Pichia angusta (Yeast).